Consider the following 143-residue polypeptide: Aspartate 1-decarboxylase (143 aa).

The active-site Schiff-base intermediate with substrate; via pyruvic acid is the serine 25. Serine 25 is subject to Pyruvic acid (Ser). Threonine 57 contacts substrate. The active-site Proton donor is the tyrosine 58. A substrate-binding site is contributed by glycine 73–alanine 75.

The protein belongs to the PanD family. In terms of assembly, heterooctamer of four alpha and four beta subunits. Requires pyruvate as cofactor. In terms of processing, is synthesized initially as an inactive proenzyme, which is activated by self-cleavage at a specific serine bond to produce a beta-subunit with a hydroxyl group at its C-terminus and an alpha-subunit with a pyruvoyl group at its N-terminus.

The protein resides in the cytoplasm. The enzyme catalyses L-aspartate + H(+) = beta-alanine + CO2. The protein operates within cofactor biosynthesis; (R)-pantothenate biosynthesis; beta-alanine from L-aspartate: step 1/1. In terms of biological role, catalyzes the pyruvoyl-dependent decarboxylation of aspartate to produce beta-alanine. The protein is Aspartate 1-decarboxylase of Mycolicibacterium paratuberculosis (strain ATCC BAA-968 / K-10) (Mycobacterium paratuberculosis).